A 280-amino-acid polypeptide reads, in one-letter code: 2-dehydro-3-deoxyphosphooctonate aldolase (280 aa).

The protein belongs to the KdsA family.

It is found in the cytoplasm. It carries out the reaction D-arabinose 5-phosphate + phosphoenolpyruvate + H2O = 3-deoxy-alpha-D-manno-2-octulosonate-8-phosphate + phosphate. It functions in the pathway carbohydrate biosynthesis; 3-deoxy-D-manno-octulosonate biosynthesis; 3-deoxy-D-manno-octulosonate from D-ribulose 5-phosphate: step 2/3. It participates in bacterial outer membrane biogenesis; lipopolysaccharide biosynthesis. The chain is 2-dehydro-3-deoxyphosphooctonate aldolase from Coxiella burnetii (strain CbuK_Q154) (Coxiella burnetii (strain Q154)).